The sequence spans 126 residues: Glycine cleavage system H protein (126 aa).

One can recognise a Lipoyl-binding domain in the interval 22–104 (VAYVGITDYA…YGKGWLIKIS (83 aa)). Lysine 63 carries the N6-lipoyllysine modification.

The protein belongs to the GcvH family. In terms of assembly, the glycine cleavage system is composed of four proteins: P, T, L and H. (R)-lipoate serves as cofactor.

Functionally, the glycine cleavage system catalyzes the degradation of glycine. The H protein shuttles the methylamine group of glycine from the P protein to the T protein. The polypeptide is Glycine cleavage system H protein (Parabacteroides distasonis (strain ATCC 8503 / DSM 20701 / CIP 104284 / JCM 5825 / NCTC 11152)).